The following is a 932-amino-acid chain: MWGFWLLLFWGFSGTHRWGMTTLAILGQRLNGVNECQDTTTCPAYATCTDTTESYYCTCKQGFLPSNGQTNFQGPGVECQDVNECLRSDSPCGSNSVCTNIPGRARCSCLSGFSSSAGGSWILGSPGHFLCTDVDECLTIGICPKNSNCSNSVGSYSCTCQSGFVSNGSTCEDEDECVTRNACPEHATCHNTLGSYYCTCNEGLEFSGGGPMFQGLEESCEDVDECSRNSTLCGPSFICINTLGSYSCSCPAGFSLSTFQIPGHPADGNCTDIDECDDICPSNSSCTNTLGSYFCTCHPGFASSNGQLNFTDQEVTCEDIDECTQDPFRCGRNSSCTNVPGSYNCSCLPDFRMDPGGSQAHGNFTCKRIPFKCKEDLIPKSEQIEQCQAGQGRNLDYTSFCTFVNATFTILDNTCENKSAPVSLQSAATSVSLMLEQASTWFEFSREETSTLGTILLETVESTMLAALLTPSGNASQTIRTEYLEIESKVINEECNEENVSINLKARGDKMDVGCFIIKESESTGTPGVAFVSFAHMDSVLDERFFEDGQASWKLRMNSHVVGGTVTGERKEDFSKPIVYTLQHIQPKQKSERSICVSWNTDVEDGRWTPSGCETVEASETHTVCSCNRMTNLAIIMASGELTMEFSLYIISYVGTVISLVCLALAIATFLLFRAVQNHNTYLHLHLCVCLFLAKILFLTGIDKTDNQTACAIIAGFLHYLFLACFFWMLVEAVMLFLMVRNLKVVNYFSSRNIKMLHLCAFGYGLPVVVVIISATVHPWGYGMHNRCWLNTETGFIWSFLGPVCMIITINSALLAWTLWVLRQKLCSVNSEVSKLKDTRLLTFKAIAQIFILGCSWVLGIFQIGPLASIMAYLFTTINSLQGAFIFLIHCLLNRQVRDEYRKLLTRKTDLSSHSQTSGILLSSMPSTSKTG.

The signal sequence occupies residues 1 to 15; sequence MWGFWLLLFWGFSGT. The Extracellular portion of the chain corresponds to 16 to 652; it reads HRWGMTTLAI…TMEFSLYIIS (637 aa). EGF-like domains follow at residues 32–69 and 81–119; these read GVNE…SNGQ and DVNE…SAGG. Disulfide bonds link cysteine 36/cysteine 48, cysteine 42/cysteine 57, cysteine 85/cysteine 98, cysteine 92/cysteine 107, cysteine 137/cysteine 149, cysteine 143/cysteine 158, cysteine 160/cysteine 171, cysteine 177/cysteine 189, cysteine 183/cysteine 198, cysteine 226/cysteine 239, and cysteine 233/cysteine 248. The region spanning 133–172 is the EGF-like 3; calcium-binding domain; that stretch reads DVDECLTIGICPKNSNCSNSVGSYSCTCQSGFVSNGSTCE. N-linked (GlcNAc...) asparagine glycans are attached at residues asparagine 148 and asparagine 167. Residues 173–210 enclose the EGF-like 4; calcium-binding domain; the sequence is DEDECVTRNACPEHATCHNTLGSYYCTCNEGLEFSGGG. An EGF-like 5; calcium-binding domain is found at 222-260; that stretch reads DVDECSRNSTLCGPSFICINTLGSYSCSCPAGFSLSTFQ. Asparagine 229 is a glycosylation site (N-linked (GlcNAc...) asparagine). N-linked (GlcNAc...) asparagine glycans are attached at residues asparagine 269, asparagine 283, asparagine 309, asparagine 333, asparagine 344, asparagine 363, asparagine 405, asparagine 417, asparagine 474, and asparagine 499. One can recognise an EGF-like 6; calcium-binding domain in the interval 272-307; it reads DIDECDDICPSNSSCTNTLGSYFCTCHPGFASSNGQ. Disulfide bonds link cysteine 276–cysteine 286 and cysteine 280–cysteine 295. Residues 319–354 enclose the EGF-like 7; calcium-binding domain; sequence DIDECTQDPFRCGRNSSCTNVPGSYNCSCLPDFRMD. Intrachain disulfides connect cysteine 323–cysteine 336 and cysteine 330–cysteine 345. The GAIN-B domain occupies 482–643; sequence EYLEIESKVI…AIIMASGELT (162 aa). Residues 507–509 carry the Cell attachment site motif; it reads RGD. 2 disulfides stabilise this stretch: cysteine 596/cysteine 625 and cysteine 613/cysteine 627. The segment at 596-643 is GPS; sequence CVSWNTDVEDGRWTPSGCETVEASETHTVCSCNRMTNLAIIMASGELT. A helical transmembrane segment spans residues 653–673; it reads YVGTVISLVCLALAIATFLLF. Topologically, residues 674–681 are cytoplasmic; the sequence is RAVQNHNT. Residues 682 to 702 form a helical membrane-spanning segment; that stretch reads YLHLHLCVCLFLAKILFLTGI. Over 703 to 719 the chain is Extracellular; the sequence is DKTDNQTACAIIAGFLH. N-linked (GlcNAc...) asparagine glycosylation is present at asparagine 707. Residues 720–740 traverse the membrane as a helical segment; it reads YLFLACFFWMLVEAVMLFLMV. Over 741–756 the chain is Cytoplasmic; the sequence is RNLKVVNYFSSRNIKM. Residues 757-777 traverse the membrane as a helical segment; it reads LHLCAFGYGLPVVVVIISATV. The Extracellular portion of the chain corresponds to 778–795; it reads HPWGYGMHNRCWLNTETG. The helical transmembrane segment at 796–816 threads the bilayer; that stretch reads FIWSFLGPVCMIITINSALLA. Over 817 to 849 the chain is Cytoplasmic; it reads WTLWVLRQKLCSVNSEVSKLKDTRLLTFKAIAQ. Residues 850–870 traverse the membrane as a helical segment; the sequence is IFILGCSWVLGIFQIGPLASI. Over 871 to 872 the chain is Extracellular; sequence MA. Residues 873–893 form a helical membrane-spanning segment; sequence YLFTTINSLQGAFIFLIHCLL. Over 894-932 the chain is Cytoplasmic; it reads NRQVRDEYRKLLTRKTDLSSHSQTSGILLSSMPSTSKTG.

It belongs to the G-protein coupled receptor 2 family. Adhesion G-protein coupled receptor (ADGR) subfamily.

Its subcellular location is the cell membrane. Orphan receptor involved in cell adhesion and probably in cell-cell interactions involved specifically cells of the immune system. May play a role in regulatory T-cells (Treg) development. The protein is Adhesion G protein-coupled receptor E2 (Adgre1) of Rattus norvegicus (Rat).